The primary structure comprises 549 residues: Cytoplasmic trehalase (549 aa).

Substrate contacts are provided by residues arginine 168, 175-176, asparagine 212, 221-223, 292-294, and glycine 324; these read WD, RSQ, and RDE. Residues aspartate 326 and glutamate 509 each act as proton donor/acceptor in the active site. Glutamate 525 provides a ligand contact to substrate.

This sequence belongs to the glycosyl hydrolase 37 family. Monomer.

It localises to the cytoplasm. It carries out the reaction alpha,alpha-trehalose + H2O = alpha-D-glucose + beta-D-glucose. The protein operates within glycan degradation; trehalose degradation; D-glucose from alpha,alpha-trehalose: step 1/1. Its function is as follows. Hydrolyzes trehalose to glucose. Could be involved, in cells returning to low osmolarity conditions, in the utilization of the accumulated cytoplasmic trehalose, which was synthesized in response to high osmolarity. This chain is Cytoplasmic trehalase, found in Escherichia coli O127:H6 (strain E2348/69 / EPEC).